The primary structure comprises 257 residues: 3-methyl-2-oxobutanoate hydroxymethyltransferase (257 aa).

Mg(2+) is bound by residues D42 and D86. 3-methyl-2-oxobutanoate is bound by residues 42–43 (DS), D86, and K116. E118 is a binding site for Mg(2+). Catalysis depends on E185, which acts as the Proton acceptor.

It belongs to the PanB family. In terms of assembly, homodecamer; pentamer of dimers. Mg(2+) is required as a cofactor.

It is found in the cytoplasm. It catalyses the reaction 3-methyl-2-oxobutanoate + (6R)-5,10-methylene-5,6,7,8-tetrahydrofolate + H2O = 2-dehydropantoate + (6S)-5,6,7,8-tetrahydrofolate. Its pathway is cofactor biosynthesis; (R)-pantothenate biosynthesis; (R)-pantoate from 3-methyl-2-oxobutanoate: step 1/2. Catalyzes the reversible reaction in which hydroxymethyl group from 5,10-methylenetetrahydrofolate is transferred onto alpha-ketoisovalerate to form ketopantoate. This is 3-methyl-2-oxobutanoate hydroxymethyltransferase from Prochlorococcus marinus (strain AS9601).